The chain runs to 145 residues: Large-conductance mechanosensitive channel (145 aa).

Transmembrane regions (helical) follow at residues 14–34 (VMDL…VKSL), 38–58 (LIMP…YFLP), and 81–101 (GSFL…FLMV).

Belongs to the MscL family. In terms of assembly, homopentamer.

Its subcellular location is the cell inner membrane. Functionally, channel that opens in response to stretch forces in the membrane lipid bilayer. May participate in the regulation of osmotic pressure changes within the cell. This Rhizobium etli (strain CIAT 652) protein is Large-conductance mechanosensitive channel.